The primary structure comprises 648 residues: PTS system N-acetylglucosamine-specific EIICBA component (648 aa).

N-formylmethionine is present on M1. Residues 1 to 371 (MNILGFFQRL…FNLKTPGRED (371 aa)) form the PTS EIIC type-1 domain. 12 helical membrane-spanning segments follow: residues 16-36 (LPIA…PDLL), 38-58 (VAFI…IFAI), 70-90 (GAAA…MVTI), 92-112 (PEIN…GAAY), 132-152 (FVPI…GYVW), 159-179 (IHAG…IFGF), 192-212 (VLNT…GTVF), 232-252 (GFFP…YFAA), 260-280 (VGGM…TEPL), 282-302 (FLFM…TGIS), 303-323 (LFVA…GAID), and 339-359 (MLLV…SLVI). The region spanning 390-472 (TQLATNYIAA…KKVVARGPVA (83 aa)) is the PTS EIIB type-1 domain. The active-site Phosphocysteine intermediate; for EIIB activity is C412. C412 is subject to Phosphocysteine; by EIIA. Positions 517–621 (DEAFASKAVG…SMISPVVCSN (105 aa)) constitute a PTS EIIA type-1 domain. 2 residues coordinate Zn(2+): H554 and H569. Catalysis depends on H569, which acts as the Tele-phosphohistidine intermediate; for EIIA activity. Position 569 is a phosphohistidine; by HPr (H569).

Zn(2+) serves as cofactor. 60% of isolated protein was N-formylated.

The protein resides in the cell inner membrane. It carries out the reaction N(pros)-phospho-L-histidyl-[protein] + N-acetyl-D-glucosamine(out) = N-acetyl-D-glucosamine 6-phosphate(in) + L-histidyl-[protein]. P-chloromercuribenzoate inhibits the accumulation of both N-acetyl-D-glucosamine and antibiotic streptozotocin (2-deoxy-2-(3-methyl-3-nitrosoureido)-D-glucopyranose). N-acetyl-D-glucosamine is a competitive inhibitor for the uptake of streptozotocin. In terms of biological role, the phosphoenolpyruvate-dependent sugar phosphotransferase system (sugar PTS), a major carbohydrate active transport system, catalyzes the phosphorylation of incoming sugar substrates concomitantly with their translocation across the cell membrane. This system is involved in N-acetylglucosamine transport. It can also transport and phosphorylate the antibiotic streptozotocin. Could play a significant role in the recycling of peptidoglycan. In Escherichia coli (strain K12), this protein is PTS system N-acetylglucosamine-specific EIICBA component.